Consider the following 387-residue polypeptide: MDSQARIQANLRHIQAFEAKPNPKALPETAVTRGFEKVAFPKLVRELTCDNAVVRKKSLLAARELLSSPVNHVQCVAAGATPAIVALLQDQTDDETRYYAAGTLKLLAAKEVGARDLAQHSGLDALAAALEDPSEGVRDEAYGALIEAARFDSTRRALEACGSGAVLPRLMELALLEAQGGAAGRAQQGLVLLFTCTQARHNAGILSQLVDVAQAIPHLAGLLKPELPMPVRHAAAELLGALATREDAKIQAVQVGAVPLLLLAASPSVPVPFATSAVAALGAITIRREGKYAALESPGGLAGLVSVLDPCHEQLCINAMTAVSNVAEAPEARAILVASGAGPKLQHIFETATVEVVKRAAAQAIRQCRFKHLPYEVLPGAPPINEE.

ARM repeat units follow at residues 24-67, 69-109, 111-150, 154-198, 204-244, 245-286, 289-328, and 330-370; these read KALP…ELLS, PVNH…LLAA, EVGA…EAAR, TRRA…TCTQ, GILS…ALAT, REDA…AITI, EGKY…NVAE, and PEAR…QCRF.

The protein belongs to the flagellar radial spoke RSP14 family.

The protein localises to the cytoplasm. It is found in the cytoskeleton. The protein resides in the flagellum axoneme. This Chlamydomonas reinhardtii (Chlamydomonas smithii) protein is Radial spoke protein 14 (RSP14).